A 333-amino-acid chain; its full sequence is Foldase protein PrsA (333 aa).

The first 22 residues, 1–22 (MKKSTKLLAGIVTLASAMTLAA), serve as a signal peptide directing secretion. A lipid anchor (N-palmitoyl cysteine) is attached at cysteine 23. Cysteine 23 carries the S-diacylglycerol cysteine lipid modification. The 96-residue stretch at 145–240 (TPEMTTQVIT…NKFYIVKVTK (96 aa)) folds into the PpiC domain. A disordered region spans residues 301–333 (DKKASKANTSKSDQKTSSDSSKDSQSSKSKSEK). Basic and acidic residues predominate over residues 312-322 (SDQKTSSDSSK). The segment covering 323 to 333 (DSQSSKSKSEK) has biased composition (low complexity).

The protein belongs to the PrsA family.

Its subcellular location is the cell membrane. It catalyses the reaction [protein]-peptidylproline (omega=180) = [protein]-peptidylproline (omega=0). In terms of biological role, plays a major role in protein secretion by helping the post-translocational extracellular folding of several secreted proteins. The chain is Foldase protein PrsA from Streptococcus equi subsp. zooepidemicus (strain H70).